Reading from the N-terminus, the 215-residue chain is Cytochrome b6 (215 aa).

The helical transmembrane segment at 32–52 (IFYCLGGVTLVCFIIQFATGF) threads the bilayer. Cys-35 contributes to the heme c binding site. His-86 and His-100 together coordinate heme b. 3 consecutive transmembrane segments (helical) span residues 90–110 (ASMM…TGGF), 116–136 (LTWI…VTGY), and 186–206 (LHTF…FLMI). Heme b is bound by residues His-187 and His-202.

The protein belongs to the cytochrome b family. PetB subfamily. The 4 large subunits of the cytochrome b6-f complex are cytochrome b6, subunit IV (17 kDa polypeptide, PetD), cytochrome f and the Rieske protein, while the 4 small subunits are PetG, PetL, PetM and PetN. The complex functions as a dimer. Heme b is required as a cofactor. It depends on heme c as a cofactor.

The protein resides in the cellular thylakoid membrane. Component of the cytochrome b6-f complex, which mediates electron transfer between photosystem II (PSII) and photosystem I (PSI), cyclic electron flow around PSI, and state transitions. This chain is Cytochrome b6, found in Acaryochloris marina (strain MBIC 11017).